A 464-amino-acid polypeptide reads, in one-letter code: Serine/threonine-protein kinase 38-like (464 aa).

Ala2 carries the post-translational modification N-acetylalanine. Residues Lys64–Asp89 are S100B binding. Thr75 is modified (phosphothreonine). Residues Phe90–Phe383 form the Protein kinase domain. Residues Ile96–Val104 and Lys119 each bind ATP. Residue Asp213 is the Proton acceptor of the active site. Position 282 is a phosphoserine; by autocatalysis (Ser282). The 70-residue stretch at Glu384–Gly453 folds into the AGC-kinase C-terminal domain. Thr442 carries the phosphothreonine; by STK24/MST3 modification.

The protein belongs to the protein kinase superfamily. AGC Ser/Thr protein kinase family. Homodimeric S100B binds two molecules of STK38L. Interacts with MOB1 and MOB2. Interacts with MICAL1; leading to inhibit the protein kinase activity by antagonizing activation by MST1/STK4. It depends on Mg(2+) as a cofactor. Highly expressed in the large and small intestine, stomach and testis. High levels also present in the brain, in particular the neurocortex, basal forebrain, hippocampus, the amygdala, cerebellum and brainstem.

The protein resides in the cytoplasm. It localises to the cytoskeleton. Its subcellular location is the membrane. It carries out the reaction L-seryl-[protein] + ATP = O-phospho-L-seryl-[protein] + ADP + H(+). It catalyses the reaction L-threonyl-[protein] + ATP = O-phospho-L-threonyl-[protein] + ADP + H(+). Its activity is regulated as follows. Activated by binding of S100B which releases autoinhibitory N-lobe interactions, enabling ATP to bind and the autophosphorylation of Ser-282. Thr-442 then undergoes calcium-dependent phosphorylation by STK24/MST3. Interactions between phosphorylated Thr-442 and the N-lobe promote additional structural changes that complete the activation of the kinase. Autoinhibition is also released by the binding of MOB1/MOBKL1A and MOB2 to the N-terminal of STK38L. In terms of biological role, involved in the regulation of structural processes in differentiating and mature neuronal cells. The sequence is that of Serine/threonine-protein kinase 38-like from Mus musculus (Mouse).